The following is a 377-amino-acid chain: Succinyl-diaminopimelate desuccinylase (377 aa).

Position 67 (His67) interacts with Zn(2+). Residue Asp69 is part of the active site. Asp100 is a binding site for Zn(2+). Residue Glu134 is the Proton acceptor of the active site. 3 residues coordinate Zn(2+): Glu135, Glu163, and His349.

Belongs to the peptidase M20A family. DapE subfamily. Homodimer. Zn(2+) is required as a cofactor. Co(2+) serves as cofactor.

It catalyses the reaction N-succinyl-(2S,6S)-2,6-diaminopimelate + H2O = (2S,6S)-2,6-diaminopimelate + succinate. The protein operates within amino-acid biosynthesis; L-lysine biosynthesis via DAP pathway; LL-2,6-diaminopimelate from (S)-tetrahydrodipicolinate (succinylase route): step 3/3. Functionally, catalyzes the hydrolysis of N-succinyl-L,L-diaminopimelic acid (SDAP), forming succinate and LL-2,6-diaminopimelate (DAP), an intermediate involved in the bacterial biosynthesis of lysine and meso-diaminopimelic acid, an essential component of bacterial cell walls. The polypeptide is Succinyl-diaminopimelate desuccinylase (Buchnera aphidicola subsp. Baizongia pistaciae (strain Bp)).